The chain runs to 77 residues: Probable Fe(2+)-trafficking protein (77 aa).

This sequence belongs to the Fe(2+)-trafficking protein family.

In terms of biological role, could be a mediator in iron transactions between iron acquisition and iron-requiring processes, such as synthesis and/or repair of Fe-S clusters in biosynthetic enzymes. This Baumannia cicadellinicola subsp. Homalodisca coagulata protein is Probable Fe(2+)-trafficking protein.